We begin with the raw amino-acid sequence, 256 residues long: Phosphatidylglycerol--prolipoprotein diacylglyceryl transferase (256 aa).

3 consecutive transmembrane segments (helical) span residues 19–39 (VHWYGLMYLIGFIGAWLLGYW), 56–76 (LIFYSALGVILGGRVGYMLFY), and 91–111 (IWEGGMSFHGGLLGVVIAAWL). Arginine 139 is a binding site for a 1,2-diacyl-sn-glycero-3-phospho-(1'-sn-glycerol). A helical transmembrane segment spans residues 231–251 (FGWLTMGQVLSIPMLLIGIWL).

The protein belongs to the Lgt family.

Its subcellular location is the cell inner membrane. It carries out the reaction L-cysteinyl-[prolipoprotein] + a 1,2-diacyl-sn-glycero-3-phospho-(1'-sn-glycerol) = an S-1,2-diacyl-sn-glyceryl-L-cysteinyl-[prolipoprotein] + sn-glycerol 1-phosphate + H(+). It functions in the pathway protein modification; lipoprotein biosynthesis (diacylglyceryl transfer). Its function is as follows. Catalyzes the transfer of the diacylglyceryl group from phosphatidylglycerol to the sulfhydryl group of the N-terminal cysteine of a prolipoprotein, the first step in the formation of mature lipoproteins. The chain is Phosphatidylglycerol--prolipoprotein diacylglyceryl transferase from Legionella pneumophila (strain Corby).